Consider the following 1284-residue polypeptide: MRPPRSNTKAAFSSLQFGLLCLLLLVNNGIKSVQADAFTDYFSDYDCNQPLMERAVLTATSSLTERGPDKARLNGNAAWTPVENTYNHFLTLDLGDPRMVRKIATMGRMHTDEFVTEYIVQYSDDGEFWRSYVNPTSEPQMFKGNSDGNSIHYNVFEVPIIAQWVRINPTRWHDRISMRVELYGCDYISENLYFNGTGLVRYDLRREPITSTKESIRFRFKTAFANGVMMYSRGTQGDYYALQLKDNKMVLNLDLGSRVMTSLSVGSLLDDNVWHDVVISRNQRDIIFSVDRVIVRGRIQGEFTRLNLNRELYLGGVPNVQEGLIVQQNFSGCLENIYFNSTNFIRVMKDSTELGEGYLFTRVNTIYACPSPPIYPVTFTTRSSFVRLKGYENSQRLNVSFYFRTYEETGVMLHHDFYSGGYLKVFLEFGKVKIDLKVKDKARIILDNYDDQFNDGKWHSFVISIEKNRLILNIDQRPMTTTKSMQVATGAQYYIAGGKDKNGFVGCMRLISVDGNYKLPQDWVKGEEVCCGDDVVVDACQMIDRCNPNPCQHKGLCHQNSREFFCDCGHTGYAGAVCHTSNNPLSCLALKNVQHVQQRVNLNLDVDGSGPLEPFPVTCEFYSDGRVITTLSHSQEHTTTVDGFQEPGSFEQSIMYDANQLQIEALLNRSHSCWQRLSYSCRSSRLFNSPSEAGNFRPFSWWISRHNQPMDYWAGALPGSRKCECGILGKCHDPTKWCNCDSNSLEWMEDGGDIREKEYLPVRAVKFGDTGTPLDEKMGRYTLGPLRCEGDDLFSNVVTFRIADASINLPPFDMGHSGDIYLEFRTTQENSVIFHATGPTDYIKLSLNGGNKLQFQYQAGSGPLGVNVGTSYHLNDNNWHTVSVERNRKEARLVVDGSIKAEVREPPGPVRALHLTSDLVIGATTEYRDGYVGCIRALLLNGKMVDLKEYSKRGLYGISTGCVGRCESNPCLNNGTCIERYDGYSCDCRWSAFKGPICADEIGVNLRSSSIIRYEFEGSFRSTIAENIRVGFTTTIPKGFLLGFSSNLTGEYLTIQISNSGHLRCVFDFGFERQEIIFPKKHFGLGQYHDMHFMRKNGGSTVVLKVDNYEPVEYNFDIKASADAQFNNIQYMYIGKNESMTDGFVGCVSRVQFDDIYPLKLMFQQNPPKNVKSLGTQLTEDFCGVEPVTHPPIEIETRPPPLVDEEKLRKAYNEVDSVLLACLLVILFLLLILMFFLIGRYLHRHKGDYLTHEDQGADGADDPDDAVLHSTTGHQVRKRTEIFI.

The first 35 residues, 1 to 35, serve as a signal peptide directing secretion; the sequence is MRPPRSNTKAAFSSLQFGLLCLLLLVNNGIKSVQA. The Extracellular portion of the chain corresponds to 36-1217; that stretch reads DAFTDYFSDY…LRKAYNEVDS (1182 aa). The F5/8 type C domain occupies 47–185; that stretch reads CNQPLMERAV…ISMRVELYGC (139 aa). The cysteines at positions 47 and 185 are disulfide-linked. Residues N195, N329, N340, and N398 are each glycosylated (N-linked (GlcNAc...) asparagine). The Laminin G-like 1 domain occupies 220–369; it reads FKTAFANGVM…FTRVNTIYAC (150 aa). A disulfide bridge connects residues C333 and C369. Residues 403–540 enclose the Laminin G-like 2 domain; the sequence is FRTYEETGVM…CGDDVVVDAC (138 aa). Disulfide bonds link C507/C540, C546/C557, C551/C566, and C568/C578. In terms of domain architecture, EGF-like 1 spans 542-579; it reads MIDRCNPNPCQHKGLCHQNSREFFCDCGHTGYAGAVCH. The N-linked (GlcNAc...) asparagine glycan is linked to N668. The Laminin G-like 3 domain occupies 824–962; it reads FRTTQENSVI…RGLYGISTGC (139 aa). 4 disulfides stabilise this stretch: C934–C962, C966–C977, C971–C986, and C988–C998. One can recognise an EGF-like 2 domain in the interval 962-999; it reads CVGRCESNPCLNNGTCIERYDGYSCDCRWSAFKGPICA. N-linked (GlcNAc...) asparagine glycosylation is present at N974. The Laminin G-like 4 domain maps to 1032–1183; sequence FTTTIPKGFL…LGTQLTEDFC (152 aa). N-linked (GlcNAc...) asparagine glycosylation is found at N1047 and N1137. A disulfide bond links C1147 and C1183. Residues 1218-1238 form a helical membrane-spanning segment; the sequence is VLLACLLVILFLLLILMFFLI. Over 1239–1284 the chain is Cytoplasmic; the sequence is GRYLHRHKGDYLTHEDQGADGADDPDDAVLHSTTGHQVRKRTEIFI.

It belongs to the neurexin family. In terms of assembly, forms a complex with Nrg and Cont. Forms a complex composed of septa junction proteins Nrx-IV/Nrx, Tsf2/MTf, Cont and Nrg during late embryogenesis. The C-terminal region interacts with coracle. Interacts with Patj in cis form. As to expression, found in septate junctions of epithelial and glial cells.

Its subcellular location is the cell membrane. The protein resides in the cell junction. It localises to the septate junction. Seems to play a role in the formation and function of septate junctions. Septate junctions, which are the equivalent of vertebrates tight junctions, are characterized by regular arrays of transverse structures that span the intermembrane space and form a physical barrier to diffusion. Required for the blood-brain barrier formation. In Drosophila melanogaster (Fruit fly), this protein is Neurexin-4 (Nrx-IV).